Reading from the N-terminus, the 182-residue chain is Large ribosomal subunit protein uL16 (182 aa).

It belongs to the universal ribosomal protein uL16 family.

The protein is Large ribosomal subunit protein uL16 of Pyrobaculum islandicum (strain DSM 4184 / JCM 9189 / GEO3).